Consider the following 833-residue polypeptide: Protein PAT1 homolog 1 (833 aa).

Disordered regions lie at residues 279–313 (DMRE…MHGM), 398–427 (NIRQ…SGMP), and 492–549 (EEAT…DKKL). Residues 303–313 (PSLSPGGMHGM) show a composition bias toward low complexity. Over residues 398–408 (NIRQNGPQFSH) the composition is skewed to polar residues.

The protein belongs to the PAT1 family.

The protein localises to the cytoplasm. It is found in the P-body. In terms of biological role, RNA-binding protein involved in deadenylation-dependent decapping of mRNAs, leading to the degradation of mRNAs. Acts as a scaffold protein that connects deadenylation and decapping machinery. Required for the recruitment of P-body components such as cgh-1 in somatic blastomeres. May play a role in recruiting the decapping enzyme dcap-1 to cytoplasmic puncta in the cell body of the posterior touch receptor neuron, PLM. The polypeptide is Protein PAT1 homolog 1 (Caenorhabditis elegans).